The chain runs to 378 residues: Ribosomal RNA large subunit methyltransferase G (378 aa).

The protein belongs to the methyltransferase superfamily. RlmG family.

It localises to the cytoplasm. It catalyses the reaction guanosine(1835) in 23S rRNA + S-adenosyl-L-methionine = N(2)-methylguanosine(1835) in 23S rRNA + S-adenosyl-L-homocysteine + H(+). In terms of biological role, specifically methylates the guanine in position 1835 (m2G1835) of 23S rRNA. The protein is Ribosomal RNA large subunit methyltransferase G of Escherichia coli (strain ATCC 8739 / DSM 1576 / NBRC 3972 / NCIMB 8545 / WDCM 00012 / Crooks).